Here is a 381-residue protein sequence, read N- to C-terminus: tRNA-specific 2-thiouridylase MnmA (381 aa).

Residues glycine 9–serine 16 and methionine 35 contribute to the ATP site. Residues asparagine 95 to aspartate 97 are interaction with target base in tRNA. The active-site Nucleophile is cysteine 100. Cysteine 100 and cysteine 196 form a disulfide bridge. Glycine 124 serves as a coordination point for ATP. The interval lysine 146–glutamine 148 is interaction with tRNA. Cysteine 196 (cysteine persulfide intermediate) is an active-site residue. An interaction with tRNA region spans residues arginine 308–tyrosine 309.

Belongs to the MnmA/TRMU family.

Its subcellular location is the cytoplasm. The catalysed reaction is S-sulfanyl-L-cysteinyl-[protein] + uridine(34) in tRNA + AH2 + ATP = 2-thiouridine(34) in tRNA + L-cysteinyl-[protein] + A + AMP + diphosphate + H(+). Its function is as follows. Catalyzes the 2-thiolation of uridine at the wobble position (U34) of tRNA, leading to the formation of s(2)U34. This Paraburkholderia xenovorans (strain LB400) protein is tRNA-specific 2-thiouridylase MnmA.